The sequence spans 244 residues: Large ribosomal subunit protein bL25 (244 aa).

Positions A197–E244 are disordered. Residues A204–E215 show a composition bias toward low complexity.

Belongs to the bacterial ribosomal protein bL25 family. CTC subfamily. As to quaternary structure, part of the 50S ribosomal subunit; part of the 5S rRNA/L5/L18/L25 subcomplex. Contacts the 5S rRNA. Binds to the 5S rRNA independently of L5 and L18.

This is one of the proteins that binds to the 5S RNA in the ribosome where it forms part of the central protuberance. This chain is Large ribosomal subunit protein bL25, found in Coxiella burnetii (strain CbuK_Q154) (Coxiella burnetii (strain Q154)).